The primary structure comprises 194 residues: Peptidyl-tRNA hydrolase (194 aa).

Tyr-17 serves as a coordination point for tRNA. The active-site Proton acceptor is His-22. TRNA contacts are provided by Phe-68, Asn-70, and Asn-116.

Belongs to the PTH family. In terms of assembly, monomer.

It is found in the cytoplasm. It catalyses the reaction an N-acyl-L-alpha-aminoacyl-tRNA + H2O = an N-acyl-L-amino acid + a tRNA + H(+). In terms of biological role, hydrolyzes ribosome-free peptidyl-tRNAs (with 1 or more amino acids incorporated), which drop off the ribosome during protein synthesis, or as a result of ribosome stalling. Its function is as follows. Catalyzes the release of premature peptidyl moieties from peptidyl-tRNA molecules trapped in stalled 50S ribosomal subunits, and thus maintains levels of free tRNAs and 50S ribosomes. The protein is Peptidyl-tRNA hydrolase of Actinobacillus pleuropneumoniae serotype 5b (strain L20).